Consider the following 125-residue polypeptide: Protein MGF 360-9L (125 aa).

Belongs to the asfivirus MGF 360 family. As to quaternary structure, interacts with host STAT1; this interaction mediates STAT1 degradation through apoptosis. Interacts with host STAT2; this interaction mediates STAT2 degradation through the proteasome.

It is found in the host cytoplasm. In terms of biological role, plays a role in virus cell tropism, and may be required for efficient virus replication in macrophages. In addition, inhibits IFN-beta-induced IFN-stimulated genes (ISGs) transcription. Mechanistically, degrades host STAT1 and STAT2 through apoptosis and ubiquitin-proteasome pathways respectively. This chain is Protein MGF 360-9L, found in African swine fever virus (strain Badajoz 1971 Vero-adapted) (Ba71V).